The following is a 173-amino-acid chain: Succinate dehydrogenase assembly factor 3, mitochondrial (173 aa).

The N-terminal 59 residues, methionine 1–aspartate 59, are a transit peptide targeting the mitochondrion. The segment at phenylalanine 149–glutamate 173 is disordered. The span at glutamate 152–alanine 162 shows a compositional bias: basic and acidic residues.

It belongs to the complex I LYR family. SDHAF3 subfamily. Interacts with the iron-sulfur protein subunit within the SDH catalytic dimer.

It localises to the mitochondrion matrix. Functionally, plays an essential role in the assembly of succinate dehydrogenase (SDH), an enzyme complex (also referred to as respiratory complex II) that is a component of both the tricarboxylic acid (TCA) cycle and the mitochondrial electron transport chain, and which couples the oxidation of succinate to fumarate with the reduction of ubiquinone (coenzyme Q) to ubiquinol. Promotes maturation of the iron-sulfur protein subunit of the SDH catalytic dimer, protecting it from the deleterious effects of oxidants. May act together with SDHAF1. This chain is Succinate dehydrogenase assembly factor 3, mitochondrial, found in Mycosarcoma maydis (Corn smut fungus).